Here is a 317-residue protein sequence, read N- to C-terminus: Lipoyl synthase (317 aa).

Residues C59, C64, C70, C85, C89, C92, and S298 each coordinate [4Fe-4S] cluster. In terms of domain architecture, Radical SAM core spans 71–287 (WSQRHASFMI…AKIGKAKGFL (217 aa)).

This sequence belongs to the radical SAM superfamily. Lipoyl synthase family. Requires [4Fe-4S] cluster as cofactor.

The protein localises to the cytoplasm. The enzyme catalyses [[Fe-S] cluster scaffold protein carrying a second [4Fe-4S](2+) cluster] + N(6)-octanoyl-L-lysyl-[protein] + 2 oxidized [2Fe-2S]-[ferredoxin] + 2 S-adenosyl-L-methionine + 4 H(+) = [[Fe-S] cluster scaffold protein] + N(6)-[(R)-dihydrolipoyl]-L-lysyl-[protein] + 4 Fe(3+) + 2 hydrogen sulfide + 2 5'-deoxyadenosine + 2 L-methionine + 2 reduced [2Fe-2S]-[ferredoxin]. The protein operates within protein modification; protein lipoylation via endogenous pathway; protein N(6)-(lipoyl)lysine from octanoyl-[acyl-carrier-protein]: step 2/2. In terms of biological role, catalyzes the radical-mediated insertion of two sulfur atoms into the C-6 and C-8 positions of the octanoyl moiety bound to the lipoyl domains of lipoate-dependent enzymes, thereby converting the octanoylated domains into lipoylated derivatives. The sequence is that of Lipoyl synthase from Bartonella bacilliformis (strain ATCC 35685 / KC583 / Herrer 020/F12,63).